A 129-amino-acid chain; its full sequence is uncharacterized protein (129 aa).

This is an uncharacterized protein from Clostridium perfringens (strain 13 / Type A).